A 151-amino-acid polypeptide reads, in one-letter code: Phosphopantetheine adenylyltransferase (151 aa).

Residue Thr9 participates in substrate binding. ATP contacts are provided by residues 9 to 10 (TF) and His17. 3 residues coordinate substrate: Lys41, Thr73, and Arg87. Residues 88–90 (GIR), Glu98, and 122–128 (LTCVSST) contribute to the ATP site.

It belongs to the bacterial CoaD family. In terms of assembly, homohexamer. It depends on Mg(2+) as a cofactor.

The protein localises to the cytoplasm. It carries out the reaction (R)-4'-phosphopantetheine + ATP + H(+) = 3'-dephospho-CoA + diphosphate. Its pathway is cofactor biosynthesis; coenzyme A biosynthesis; CoA from (R)-pantothenate: step 4/5. Its function is as follows. Reversibly transfers an adenylyl group from ATP to 4'-phosphopantetheine, yielding dephospho-CoA (dPCoA) and pyrophosphate. In Bacteroides thetaiotaomicron (strain ATCC 29148 / DSM 2079 / JCM 5827 / CCUG 10774 / NCTC 10582 / VPI-5482 / E50), this protein is Phosphopantetheine adenylyltransferase.